The primary structure comprises 441 residues: Phenoloxidase-activating enzyme (441 aa).

The signal sequence occupies residues 1-21; that stretch reads MFLIWTFIVAVLAIQTKSVVA. Q22 is modified (pyrrolidone carboxylic acid). Clip domains are found at residues 23–76 and 77–127; these read SCRT…AVCC and PCNA…SICC. Cystine bridges form between C24/C75, C34/C65, C40/C76, C78/C126, C88/C117, C94/C127, C164/C305, and C203/C219. The region spanning 174–440 is the Peptidase S1 domain; the sequence is IVGGAPASID…YLPWIQNTIE (267 aa). The active-site Charge relay system is H218. E237, N239, N242, and D246 together coordinate Ca(2+). N239 carries an N-linked (GlcNAc...) asparagine glycan. The active-site Charge relay system is the D285. N334 carries an N-linked (GlcNAc...) asparagine glycan. Cystine bridges form between C356–C377 and C387–C416. S391 (charge relay system) is an active-site residue.

It belongs to the peptidase S1 family. CLIP subfamily. In the active form, heterodimer of a light chain and a heavy chain; disulfide-linked. Post-translationally, proteolytically cleaved for activation. Cleavage produces a light chain and a catalytic heavy chain which remains covalently associated probably through an interchain disulfide bond. Glycosylated.

With respect to regulation, stabilized by calcium. Inhibited by di-isopropyl phosphorofluoridate (DFP), phenylmethanesulfonylfluoride (PMSF), p-nitrophenyl-p'-guanidinobenzonate (p-NPGB), p-chloromercuribenzoate (PCMB), ethylenediaminetetraacetic acid (EDTA), urea and CI-13c. Its function is as follows. Endopeptidase with selective post-Arg cleavage site. Activates prophenoloxidase. Has a probable role in the melanization process as part of the innate immune response. The polypeptide is Phenoloxidase-activating enzyme (Bombyx mori (Silk moth)).